Reading from the N-terminus, the 402-residue chain is D-galactonate dehydratase family member EGBG_02030 (402 aa).

Residue Asp207 coordinates Mg(2+). Residue His209 participates in D-arabinonate binding. 2 residues coordinate Mg(2+): Glu233 and Glu259. D-arabinonate is bound by residues Glu259, Arg280, His309, and Glu336.

The protein belongs to the mandelate racemase/muconate lactonizing enzyme family. GalD subfamily.

Its function is as follows. Has no detectable activity with D-mannonate and with a panel of 70 other acid sugars (in vitro), in spite of the conservation of the residues that are expected to be important for catalytic activity and cofactor binding. May have evolved a divergent function. This is D-galactonate dehydratase family member EGBG_02030 from Enterococcus gallinarum (strain EG2).